The chain runs to 331 residues: Homoserine kinase (331 aa).

It belongs to the pseudomonas-type ThrB family.

It carries out the reaction L-homoserine + ATP = O-phospho-L-homoserine + ADP + H(+). The protein operates within amino-acid biosynthesis; L-threonine biosynthesis; L-threonine from L-aspartate: step 4/5. This Burkholderia pseudomallei (strain 1710b) protein is Homoserine kinase.